A 152-amino-acid polypeptide reads, in one-letter code: Globin-1 subunit beta (152 aa).

Ser-2 is subject to N-acetylserine. The region spanning 12–152 is the Globin domain; it reads VSNADQKDLL…SLVAVVQAAL (141 aa). Residues His-72 and His-104 each contribute to the heme b site.

Belongs to the globin family. As to quaternary structure, heterotetramer of two alpha chains and two beta chains.

This Anadara trapezia (Sydney cockle) protein is Globin-1 subunit beta.